A 411-amino-acid chain; its full sequence is Corticotropin-releasing factor receptor 2 (411 aa).

Residues 1 to 19 (MDAALLLSLLEANCSLALA) constitute a signal peptide (not cleaved). Residues 1-108 (MDAALLLSLL…EPILDDKQRK (108 aa)) are Extracellular-facing. 5 N-linked (GlcNAc...) asparagine glycosylation sites follow: Asn-13, Asn-41, Asn-74, Asn-86, and Asn-94. 3 disulfides stabilise this stretch: Cys-14–Cys-50, Cys-40–Cys-83, and Cys-64–Cys-98. The chain crosses the membrane as a helical span at residues 109 to 139 (YDLHYRIALIVNYLGHCVSVVALVAAFLLFL). At 140-146 (VLRSIRC) the chain is on the cytoplasmic side. A helical membrane pass occupies residues 147–171 (LRNVIHWNLITTFILRNIAWFLLQL). At 172–185 (IDHEVHEGNEVWCR) the chain is on the extracellular side. A disulfide bridge connects residues Cys-184 and Cys-254. Residues 186 to 214 (CITTIFNYFVVTNFFWMFVEGCYLHTAIV) traverse the membrane as a helical segment. Over 215–221 (MTYSTEH) the chain is Cytoplasmic. A helical transmembrane segment spans residues 222–249 (LRKWLFLFIGWCIPCPIIIAWAVGKLYY). Residues 250–265 (ENEQCWFGKEAGDLVD) lie on the Extracellular side of the membrane. The chain crosses the membrane as a helical span at residues 266–291 (YIYQGPVMLVLLINFVFLFNIVRILM). At 292–302 (TKLRASTTSET) the chain is on the cytoplasmic side. A helical transmembrane segment spans residues 303 to 327 (IQYRKAVKATLVLLPLLGITYMLFF). The Extracellular portion of the chain corresponds to 328–334 (VNPGEDD). A helical membrane pass occupies residues 335–364 (LSQIVFIYFNSFLQSFQGFFVSVFYCFFNG). Residues 365–411 (EVRAALRKRWHRWQDHHALRVPVARAMSIPTSPTRISFHSIKQTAAV) lie on the Cytoplasmic side of the membrane.

Belongs to the G-protein coupled receptor 2 family. As to quaternary structure, monomer. Interacts with CRF, UCN, UCN2 and UCN3. Post-translationally, a N-glycosylation site within the signal peptide impedes its proper cleavage and function. Highly expressed in the heart. Also expressed in lungs, skeletal muscle, gastrointestinal tract, epididymis, and brain.

The protein localises to the cell membrane. G-protein coupled receptor for CRH (corticotropin-releasing factor), UCN (urocortin), UCN2 and UCN3. Has high affinity for UCN. Ligand binding causes a conformation change that triggers signaling via guanine nucleotide-binding proteins (G proteins) and down-stream effectors, such as adenylate cyclase. Promotes the activation of adenylate cyclase, leading to increased intracellular cAMP levels. The protein is Corticotropin-releasing factor receptor 2 (Crhr2) of Mus musculus (Mouse).